The sequence spans 614 residues: Nuclear receptor subfamily 1 group D member 1 (614 aa).

Positions 1-48 are enriched in polar residues; it reads MTTLDSNNNTGGVITYIGSSGSSPNRTSPESLYSDSSNGSFQSLTQGC. The interval 1–70 is required for phosphorylation by CSNK1E and cytoplasmic localization; that stretch reads MTTLDSNNNT…TQDPARSFGS (70 aa). The disordered stretch occupies residues 1–120; it reads MTTLDSNNNT…GNRVSPSKST (120 aa). The tract at residues 1–129 is modulating; sequence MTTLDSNNNT…TSNITKLNGM (129 aa). The tract at residues 49–285 is crucial for activation of GJA1; the sequence is PTYFPPSPTG…PPRSPSPEPT (237 aa). 2 positions are modified to phosphoserine; by GSK3-beta: serine 55 and serine 59. Residues 69–103 are compositionally biased toward low complexity; it reads GSIPPSLGDDGSPSSSSSSSSSSSSSFYNGSPPGG. The segment at residues 130 to 206 is a DNA-binding region (nuclear receptor); that stretch reads VLLCKVCGDV…VGMSRDAVRF (77 aa). 2 NR C4-type zinc fingers span residues 133-153 and 170-194; these read CKVC…CEGC and CLKN…FKKC. Residues lysine 192 and lysine 193 each carry the N6-acetyllysine; by KAT5 modification. A disordered region spans residues 233–286; sequence SSQCPLETPPTQHPTPGPMGPSPPPAPAPSPLVGFSQFPQQLTPPRSPSPEPTV. Over residues 239–262 the composition is skewed to pro residues; that stretch reads ETPPTQHPTPGPMGPSPPPAPAPS. The residue at position 275 (threonine 275) is a Phosphothreonine; by CDK1. In terms of domain architecture, NR LBD spans 285-614; the sequence is TVEDVISQVA…KLLSFRVDAQ (330 aa). Cysteine 418 contributes to the heme binding site. Lysine 591 bears the N6-acetyllysine mark. Position 602 (histidine 602) interacts with heme.

The protein belongs to the nuclear hormone receptor family. NR1 subfamily. As to quaternary structure, binds DNA as a monomer or a homodimer. Interacts with C1D, NR2E3, SP1 and ZNHIT1. Interacts with OPHN1 (via C-terminus). Interacts with PER2; the interaction associates PER2 to BMAL1 promoter region. Interacts with CRY1. Interacts with CCAR2. Interacts with SIAH2. Interacts with FBXW7 and CDK1. Interacts with HUWE1. Interacts with NR0B2. Interacts with NFIL3. Interacts (via domain NR LBD) with HSP90AA1 and HSP90AB1. Post-translationally, ubiquitinated, leading to its proteasomal degradation. Ubiquitinated by the SCF(FBXW7) complex when phosphorylated by CDK1 leading to its proteasomal degradation. Ubiquitinated by SIAH2; leading to its proteasomal degradation. Rapidly ubiquitinated in response to inflammatory triggers and sumoylation is a prerequisite to its ubiquitination. In terms of processing, sumoylated by UBE2I, desumoylated by SENP1, and sumoylation is a prerequisite to its ubiquitination. Phosphorylated by CSNK1E; phosphorylation enhances its cytoplasmic localization. Post-translationally, undergoes lysosome-mediated degradation in a time-dependent manner in the liver. In terms of tissue distribution, expressed in all tissues and cell lines examined. Expressed at high levels in some squamous carcinoma cell lines.

The protein resides in the nucleus. It localises to the cytoplasm. It is found in the cell projection. Its subcellular location is the dendrite. The protein localises to the dendritic spine. Transcriptional repressor which coordinates circadian rhythm and metabolic pathways in a heme-dependent manner. Integral component of the complex transcription machinery that governs circadian rhythmicity and forms a critical negative limb of the circadian clock by directly repressing the expression of core clock components BMAL1, CLOCK and CRY1. Also regulates genes involved in metabolic functions, including lipid and bile acid metabolism, adipogenesis, gluconeogenesis and the macrophage inflammatory response. Acts as a receptor for heme which stimulates its interaction with the NCOR1/HDAC3 corepressor complex, enhancing transcriptional repression. Recognizes two classes of DNA response elements within the promoter of its target genes and can bind to DNA as either monomers or homodimers, depending on the nature of the response element. Binds as a monomer to a response element composed of the consensus half-site motif 5'-[A/G]GGTCA-3' preceded by an A/T-rich 5' sequence (RevRE), or as a homodimer to a direct repeat of the core motif spaced by two nucleotides (RevDR-2). Acts as a potent competitive repressor of ROR alpha (RORA) function and regulates the levels of its ligand heme by repressing the expression of PPARGC1A, a potent inducer of heme synthesis. Regulates lipid metabolism by repressing the expression of APOC3 and by influencing the activity of sterol response element binding proteins (SREBPs); represses INSIG2 which interferes with the proteolytic activation of SREBPs which in turn govern the rhythmic expression of enzymes with key functions in sterol and fatty acid synthesis. Regulates gluconeogenesis via repression of G6PC1 and PEPCK and adipocyte differentiation via repression of PPARG. Regulates glucagon release in pancreatic alpha-cells via the AMPK-NAMPT-SIRT1 pathway and the proliferation, glucose-induced insulin secretion and expression of key lipogenic genes in pancreatic-beta cells. Positively regulates bile acid synthesis by increasing hepatic expression of CYP7A1 via repression of NR0B2 and NFIL3 which are negative regulators of CYP7A1. Modulates skeletal muscle oxidative capacity by regulating mitochondrial biogenesis and autophagy; controls mitochondrial biogenesis and respiration by interfering with the STK11-PRKAA1/2-SIRT1-PPARGC1A signaling pathway. Represses the expression of SERPINE1/PAI1, an important modulator of cardiovascular disease and the expression of inflammatory cytokines and chemokines in macrophages. Represses gene expression at a distance in macrophages by inhibiting the transcription of enhancer-derived RNAs (eRNAs). Plays a role in the circadian regulation of body temperature and negatively regulates thermogenic transcriptional programs in brown adipose tissue (BAT); imposes a circadian oscillation in BAT activity, increasing body temperature when awake and depressing thermogenesis during sleep. In concert with NR2E3, regulates transcriptional networks critical for photoreceptor development and function. In addition to its activity as a repressor, can also act as a transcriptional activator. In the ovarian granulosa cells acts as a transcriptional activator of STAR which plays a role in steroid biosynthesis. In collaboration with SP1, activates GJA1 transcription in a heme-independent manner. Represses the transcription of CYP2B10, CYP4A10 and CYP4A14. Represses the transcription of CES2. Represses and regulates the circadian expression of TSHB in a NCOR1-dependent manner. Negatively regulates the protein stability of NR3C1 and influences the time-dependent subcellular distribution of NR3C1, thereby affecting its transcriptional regulatory activity. Plays a critical role in the circadian control of neutrophilic inflammation in the lung; under resting, non-stress conditions, acts as a rhythmic repressor to limit inflammatory activity whereas in the presence of inflammatory triggers undergoes ubiquitin-mediated degradation thereby relieving inhibition of the inflammatory response. Plays a key role in the circadian regulation of microglial activation and neuroinflammation; suppresses microglial activation through the NF-kappaB pathway in the central nervous system. Plays a role in the regulation of the diurnal rhythms of lipid and protein metabolism in the skeletal muscle via transcriptional repression of genes controlling lipid and amino acid metabolism in the muscle. This is Nuclear receptor subfamily 1 group D member 1 (NR1D1) from Ovis aries (Sheep).